Here is a 148-residue protein sequence, read N- to C-terminus: Snaclec 8 (148 aa).

The N-terminal stretch at 1-23 (MGRFIFVSFSLLVVFFSLSGTEA) is a signal peptide. The region spanning 34 to 148 (YDQNCYKAFE…DTQFRLQEPG (115 aa)) is the C-type lectin domain.

It belongs to the snaclec family. Heterodimer; disulfide-linked. Contains disulfide bonds. As to expression, expressed by the venom gland.

It localises to the secreted. Functionally, interferes with one step of hemostasis (modulation of platelet aggregation, or coagulation cascade, for example). The chain is Snaclec 8 from Echis carinatus sochureki (Saw-scaled viper).